The primary structure comprises 425 residues: Argininosuccinate synthase (425 aa).

Residues Ala7–Ser15 and Ala33 contribute to the ATP site. Tyr84 serves as a coordination point for L-citrulline. Gly114 contacts ATP. 3 residues coordinate L-aspartate: Thr116, Asn120, and Asp121. Asn120 serves as a coordination point for L-citrulline. Residues Arg124, Ser177, Ser186, Glu267, and Tyr279 each coordinate L-citrulline.

It belongs to the argininosuccinate synthase family. Type 1 subfamily. In terms of assembly, homotetramer.

It is found in the cytoplasm. It catalyses the reaction L-citrulline + L-aspartate + ATP = 2-(N(omega)-L-arginino)succinate + AMP + diphosphate + H(+). Its pathway is amino-acid biosynthesis; L-arginine biosynthesis; L-arginine from L-ornithine and carbamoyl phosphate: step 2/3. In Pseudothermotoga lettingae (strain ATCC BAA-301 / DSM 14385 / NBRC 107922 / TMO) (Thermotoga lettingae), this protein is Argininosuccinate synthase.